The primary structure comprises 763 residues: MPPIPSLWIRVFFSWLLLSLPAAAAADFSHCGGCDDGDGGGGIWSTDNILQCQRVSDFLIAMAYFSIPLELLYFATCSDLFPLKWIVLQFGAFIVLCGLTHLITMFTYEPHSFHVVLALTVAKFLTALVSFATAITLLTLIPQLLRVKVRENFLRIKARELDREVGMMKRQEEASWHVRMLTHEIRKSLDRHTILYTTMVELSKTLELQNCAVWMPSESGSEMILTHQLRQMETEDSNSLSIAMDNPDVLEIKATKDAKVLAADSALGIASRGKLEAGPVAAIRMPMLKASNFKGGTPEVMETSYAILVLVLPEDGSLGWGEEELEIVEVVADQVAVALSHAAVLEESQLIREKLAAQHRDLLRAKHETTMATEARNSFQTAMYDGMRRPMHSILGLVSMMQQENMNPEQRLVMDAIVKTSSVASTLMNDVMQTSTVNREYLSLVRRAFNLHLLVKEAISVVRCLTGCKGIDFEFEVDNSLPERVVGDEKRVFHIVLHMVGTLIQRCNAGCLSLYVNTYNEKEERHNQDWMLRRANFSGSYVCVKFEIRIRESRGNLLSSSSSRRLQGPNSTSSEMGLSFNMCKKIVQMMNGNIWSVSDSKGLGETIMLALQFQLQHVTPVSGASSDLFRSAPIPNFNGLQVILVDSDDTNRAVTHKLLEKLGCLVLSVTSGIQCINSFASAESSFQLVVLDLTMRTMDGFDVALAIRKFRGNCWPPLIVALAASTDDTVRDRCQQAGINGLIQKPVTLAALGDELYRVLQNN.

The next 3 helical transmembrane spans lie at 58–78 (FLIAMAYFSIPLELLYFATCS), 86–106 (IVLQFGAFIVLCGLTHLITMF), and 115–135 (VVLALTVAKFLTALVSFATAI). Cu cation-binding residues include Cys97 and His101. In terms of domain architecture, GAF spans 190–339 (DRHTILYTTM…VVADQVAVAL (150 aa)). Residues 382-615 (AMYDGMRRPM…TIMLALQFQL (234 aa)) enclose the Histidine kinase domain. The 120-residue stretch at 641–760 (QVILVDSDDT…ALGDELYRVL (120 aa)) folds into the Response regulatory domain. A 4-aspartylphosphate modification is found at Asp692.

This sequence belongs to the ethylene receptor family. Cu cation serves as cofactor. As to expression, expressed in anthers and hulls.

The protein localises to the endoplasmic reticulum membrane. The catalysed reaction is ATP + protein L-histidine = ADP + protein N-phospho-L-histidine.. In terms of biological role, ethylene receptor related to bacterial two-component regulators. Acts as a negative regulator of ethylene signaling. May delay the transition from the vegetative stage to the floral stage by up-regulating GI (GIGANTEA) and RCN1 and cause starch accumulation in stems by down-regulating the alpha-amylase AMY3D. The polypeptide is Ethylene receptor 2 (Oryza sativa subsp. indica (Rice)).